Here is a 294-residue protein sequence, read N- to C-terminus: uncharacterized protein (294 aa).

The protein belongs to the glycosyltransferase 2 family. WaaE/KdtX subfamily.

This is an uncharacterized protein from Rickettsia bellii (strain RML369-C).